The sequence spans 253 residues: Salivary gland SP38-40.B protein (253 aa).

The N-terminal stretch at 1-21 is a signal peptide; that stretch reads MRIKFLVVLAVICLLAHYASA. Disordered stretches follow at residues 23–51, 140–168, and 203–253; these read GMGGDKKPKDAPKPKDAPKPKEVKPVKAD, KDEKKEKKVVKVIKPPKEKPPKKPRKECS, and VQGK…DAKK. 2 stretches are compositionally biased toward basic and acidic residues: residues 26 to 51 and 154 to 168; these read GDKKPKDAPKPKDAPKPKEVKPVKAD and PPKEKPPKKPRKECS. 2 repeat units span residues 29–34 and 35–40. The 3 X 6 AA approximate tandem repeats of K-P-K-D-A-P stretch occupies residues 29–47; the sequence is KPKDAPKPKDAPKPKEVKP. Residues 41–47 form a 1-3; approximate repeat; the sequence is KPKEVKP. 2 tandem repeats follow at residues 153-156 and 158-161. The segment at 153 to 166 is 3 X 4 AA approximate tandem repeats of K-P-P-K; that stretch reads KPPKEKPPKKPRKE. A 2-3; approximate repeat occupies 162 to 166; sequence KPRKE. A compositionally biased stretch (basic residues) spans 206–217; that stretch reads KQKKGAKKAKGG. Tandem repeats lie at residues 222 to 225, 226 to 229, 230 to 233, 234 to 237, 238 to 241, and 242 to 245. The segment at 222–249 is 7 X 4 AA approximate tandem repeats of P-K-P-[GAV]; the sequence is PKPGPKPAPKPGPKPAPKPVPKPADKPK. A compositionally biased stretch (pro residues) spans 225 to 243; that stretch reads GPKPAPKPGPKPAPKPVPK. Residues 244–253 show a composition bias toward basic and acidic residues; that stretch reads PADKPKDAKK. The stretch at 246–249 is one 3-7; approximate repeat; it reads DKPK.

Salivary gland.

The protein localises to the secreted. In terms of biological role, used by the larvae to construct a supramolecular structure, the larval tube. This Chironomus tentans (Midge) protein is Salivary gland SP38-40.B protein (SP38-40.B).